Here is a 776-residue protein sequence, read N- to C-terminus: Protocadherin beta-16 (776 aa).

Positions 1 to 28 (MEIGWMHNRRQRQVLVFFVLLSLSGAGA) are cleaved as a signal peptide. At 29–690 (ELGSYSVVEE…TQANSLTVYL (662 aa)) the chain is on the extracellular side. 5 Cadherin domains span residues 35-133 (VVEE…SPMF), 138-242 (MILK…APEF), 247-347 (YKVQ…PPQV), 352-451 (LTSP…APTF), and 456-561 (YTLF…SPFV). Residues N418 and N436 are each glycosylated (N-linked (GlcNAc...) asparagine). N-linked (GlcNAc...) asparagine glycosylation occurs at N567. Residues 568–671 (GSAPCTELVP…LVDGFSQPFL (104 aa)) form the Cadherin 6 domain. A helical membrane pass occupies residues 691–711 (VVALASVSSLFLFSVLLFVAV). The Cytoplasmic segment spans residues 712-776 (RLCRRSRAAS…LKPIIPNFSP (65 aa)).

Its subcellular location is the membrane. Functionally, potential calcium-dependent cell-adhesion protein. May be involved in the establishment and maintenance of specific neuronal connections in the brain. This is Protocadherin beta-16 from Homo sapiens (Human).